Here is a 693-residue protein sequence, read N- to C-terminus: Polyribonucleotide nucleotidyltransferase (693 aa).

Mg(2+) is bound by residues Asp485 and Asp491. A KH domain is found at 552 to 611 (PRIMVLEINPSKIGDLIGPSGKNIKKIIEETHTTINIKPEGLVYISAPDQESAEKAAQMV). Positions 621 to 691 (GDIFLGKVIR…SSGRISLTRK (71 aa)) constitute an S1 motif domain.

It belongs to the polyribonucleotide nucleotidyltransferase family. Requires Mg(2+) as cofactor.

The protein resides in the cytoplasm. The catalysed reaction is RNA(n+1) + phosphate = RNA(n) + a ribonucleoside 5'-diphosphate. In terms of biological role, involved in mRNA degradation. Catalyzes the phosphorolysis of single-stranded polyribonucleotides processively in the 3'- to 5'-direction. The sequence is that of Polyribonucleotide nucleotidyltransferase from Dictyoglomus thermophilum (strain ATCC 35947 / DSM 3960 / H-6-12).